The following is a 1031-amino-acid chain: Protein translocase subunit SecA (1031 aa).

ATP-binding positions include glutamine 143, 161 to 165 (GEGKT), and aspartate 661. A compositionally biased stretch (basic and acidic residues) spans 963–973 (KERLVAKHEES). The segment at 963 to 1031 (KERLVAKHEE…GKKYKNCCGR (69 aa)) is disordered. Positions 1017, 1019, 1028, and 1029 each coordinate Zn(2+).

This sequence belongs to the SecA family. As to quaternary structure, monomer and homodimer. Part of the essential Sec protein translocation apparatus which comprises SecA, SecYEG and auxiliary proteins SecDF. Other proteins may also be involved. The cofactor is Zn(2+).

Its subcellular location is the cell inner membrane. It is found in the cytoplasm. It carries out the reaction ATP + H2O + cellular proteinSide 1 = ADP + phosphate + cellular proteinSide 2.. Part of the Sec protein translocase complex. Interacts with the SecYEG preprotein conducting channel. Has a central role in coupling the hydrolysis of ATP to the transfer of proteins into and across the cell membrane, serving as an ATP-driven molecular motor driving the stepwise translocation of polypeptide chains across the membrane. In Prosthecochloris aestuarii (strain DSM 271 / SK 413), this protein is Protein translocase subunit SecA.